The chain runs to 205 residues: Methylthioribulose-1-phosphate dehydratase (205 aa).

2 residues coordinate Zn(2+): His-95 and His-97.

Belongs to the aldolase class II family. MtnB subfamily. Zn(2+) serves as cofactor.

It catalyses the reaction 5-(methylsulfanyl)-D-ribulose 1-phosphate = 5-methylsulfanyl-2,3-dioxopentyl phosphate + H2O. It functions in the pathway amino-acid biosynthesis; L-methionine biosynthesis via salvage pathway; L-methionine from S-methyl-5-thio-alpha-D-ribose 1-phosphate: step 2/6. Catalyzes the dehydration of methylthioribulose-1-phosphate (MTRu-1-P) into 2,3-diketo-5-methylthiopentyl-1-phosphate (DK-MTP-1-P). This is Methylthioribulose-1-phosphate dehydratase from Microcystis aeruginosa (strain NIES-843 / IAM M-2473).